A 307-amino-acid chain; its full sequence is Fructokinase (307 aa).

This sequence belongs to the carbohydrate kinase PfkB family.

It catalyses the reaction D-fructose + ATP = D-fructose 6-phosphate + ADP + H(+). The protein is Fructokinase (scrK) of Salmonella typhimurium.